The following is a 544-amino-acid chain: CTP synthase (544 aa).

Residues 1 to 266 (MTKFIFVTGG…DDLICERFGL (266 aa)) are amidoligase domain. Serine 13 contacts CTP. UTP is bound at residue serine 13. ATP contacts are provided by residues 14 to 19 (SLGKGI) and aspartate 71. Mg(2+) is bound by residues aspartate 71 and glutamate 140. CTP-binding positions include 147 to 149 (DIE), 187 to 192 (KTKPTQ), and lysine 223. Residues 187–192 (KTKPTQ) and lysine 223 contribute to the UTP site. A Glutamine amidotransferase type-1 domain is found at 291–543 (TVAMVGKYVE…VKAAKNYSEA (253 aa)). Glycine 354 is a binding site for L-glutamine. The active-site Nucleophile; for glutamine hydrolysis is cysteine 381. L-glutamine-binding positions include 382–385 (LGMQ), glutamate 404, and arginine 471. Catalysis depends on residues histidine 516 and glutamate 518.

This sequence belongs to the CTP synthase family. Homotetramer.

It catalyses the reaction UTP + L-glutamine + ATP + H2O = CTP + L-glutamate + ADP + phosphate + 2 H(+). The enzyme catalyses L-glutamine + H2O = L-glutamate + NH4(+). The catalysed reaction is UTP + NH4(+) + ATP = CTP + ADP + phosphate + 2 H(+). It functions in the pathway pyrimidine metabolism; CTP biosynthesis via de novo pathway; CTP from UDP: step 2/2. With respect to regulation, allosterically activated by GTP, when glutamine is the substrate; GTP has no effect on the reaction when ammonia is the substrate. The allosteric effector GTP functions by stabilizing the protein conformation that binds the tetrahedral intermediate(s) formed during glutamine hydrolysis. Inhibited by the product CTP, via allosteric rather than competitive inhibition. Functionally, catalyzes the ATP-dependent amination of UTP to CTP with either L-glutamine or ammonia as the source of nitrogen. Regulates intracellular CTP levels through interactions with the four ribonucleotide triphosphates. This Psychrobacter arcticus (strain DSM 17307 / VKM B-2377 / 273-4) protein is CTP synthase.